The following is a 366-amino-acid chain: UDP-N-acetylglucosamine--N-acetylmuramyl-(pentapeptide) pyrophosphoryl-undecaprenol N-acetylglucosamine transferase (366 aa).

UDP-N-acetyl-alpha-D-glucosamine is bound by residues 15 to 17 (TGG), Asn127, Arg175, Ser201, Ile255, and Gln300.

It belongs to the glycosyltransferase 28 family. MurG subfamily.

Its subcellular location is the cell inner membrane. The catalysed reaction is di-trans,octa-cis-undecaprenyl diphospho-N-acetyl-alpha-D-muramoyl-L-alanyl-D-glutamyl-meso-2,6-diaminopimeloyl-D-alanyl-D-alanine + UDP-N-acetyl-alpha-D-glucosamine = di-trans,octa-cis-undecaprenyl diphospho-[N-acetyl-alpha-D-glucosaminyl-(1-&gt;4)]-N-acetyl-alpha-D-muramoyl-L-alanyl-D-glutamyl-meso-2,6-diaminopimeloyl-D-alanyl-D-alanine + UDP + H(+). Its pathway is cell wall biogenesis; peptidoglycan biosynthesis. Cell wall formation. Catalyzes the transfer of a GlcNAc subunit on undecaprenyl-pyrophosphoryl-MurNAc-pentapeptide (lipid intermediate I) to form undecaprenyl-pyrophosphoryl-MurNAc-(pentapeptide)GlcNAc (lipid intermediate II). This chain is UDP-N-acetylglucosamine--N-acetylmuramyl-(pentapeptide) pyrophosphoryl-undecaprenol N-acetylglucosamine transferase, found in Thiobacillus denitrificans (strain ATCC 25259 / T1).